An 88-amino-acid chain; its full sequence is Toxin ICK-12 (88 aa).

An N-terminal signal peptide occupies residues 1–19 (MKSIVYMLLFCTFTVVILG). Cystine bridges form between cysteine 41/cysteine 55, cysteine 41/cysteine 78, cysteine 54/cysteine 67, and cysteine 81/cysteine 88.

Belongs to the neurotoxin 27 (Jztx-72) family. ICK-41 subfamily. As to expression, expressed by the venom gland.

It localises to the secreted. In terms of biological role, probable neurotoxin with ion channel impairing activity. This is Toxin ICK-12 from Trittame loki (Brush-footed trapdoor spider).